Here is a 208-residue protein sequence, read N- to C-terminus: MSEEMQYEYLVPLEKYLSAGVRLGTRLSNKYLEDRGFIFAVRPDGLRIFDIKKIDERLKIAARFIARYPPDRVLVHTTRPYGFKPVQMFCKYVGCKALTGRFIPGTLTNPNLPHYQEADLLFVVDPKLDAQAVAEAAKMGVPVIALVDTDTPHQYIDFMIPCNNKGRKSLALIFWILARQVLRERGELKPDQDLPVPPEEFETRLVQT.

The segment at 189 to 208 (KPDQDLPVPPEEFETRLVQT) is disordered.

This sequence belongs to the universal ribosomal protein uS2 family.

In Pyrobaculum arsenaticum (strain DSM 13514 / JCM 11321 / PZ6), this protein is Small ribosomal subunit protein uS2.